Reading from the N-terminus, the 261-residue chain is Syntaxin-7 (261 aa).

Serine 2 carries the N-acetylserine modification. Topologically, residues 2 to 238 are cytoplasmic; sequence SYTPGVGGDP…DYQRKSRKTL (237 aa). Phosphothreonine is present on threonine 4. The residue at position 45 (serine 45) is a Phosphoserine. Positions 47–69 form a coiled coil; it reads ELRQQLQQKQQYTNQLTKETDKY. The residue at position 75 (serine 75) is a Phosphoserine. The residue at position 79 (threonine 79) is a Phosphothreonine. 4 positions are modified to phosphoserine: serine 125, serine 126, serine 129, and serine 205. The segment at 129-148 is disordered; it reads SGSFPEDSSKERNLVSWESQ. The t-SNARE coiled-coil homology domain occupies 165–227; sequence LRLIHERESS…QQANQQLSRA (63 aa). The helical; Anchor for type IV membrane protein transmembrane segment at 239 to 259 threads the bilayer; it reads CIIILILVIGVVIIGLIIWGL. Residues 260-261 lie on the Vesicular side of the membrane; it reads NR.

The protein belongs to the syntaxin family. Forms a SNARE complex with VTI1B, STX8 and VAMP8 which functions in the homotypic fusion of late endosomes. Component of the SNARE complex composed of STX7, STX8, VAMP7 and VTI1B that is required for heterotypic fusion of late endosomes with lysosomes. Interacts with VPS11, VPS16 and VPS18. Interacts with VPS33A. Interacts with TPC1.

Its subcellular location is the early endosome membrane. Its function is as follows. May be involved in protein trafficking from the plasma membrane to the early endosome (EE) as well as in homotypic fusion of endocytic organelles. Mediates the endocytic trafficking from early endosomes to late endosomes and lysosomes. The chain is Syntaxin-7 (STX7) from Pongo abelii (Sumatran orangutan).